The following is a 102-amino-acid chain: Omega-hexatoxin-Hi2a (102 aa).

An N-terminal signal peptide occupies residues 1 to 23 (MKFSKLSLTLALILTQALLVVCG). A propeptide spanning residues 24–56 (KINEDFMENGLESHALHDEIRKPIDTEKADAER) is cleaved from the precursor. Disulfide bonds link Cys-61–Cys-75, Cys-68–Cys-81, and Cys-74–Cys-86. The residue at position 98 (Leu-98) is a Leucine amide. Residues 100-102 (RAL) constitute a propeptide that is removed on maturation.

The protein belongs to the neurotoxin 15 family. 02 (omega-actx) subfamily. As to expression, expressed by the venom gland.

It localises to the secreted. Potent inhibitor of insect, but not mammalian, voltage-gated calcium channels (Cav). The sequence is that of Omega-hexatoxin-Hi2a from Hadronyche infensa (Fraser island funnel-web spider).